The primary structure comprises 323 residues: Mas-related G-protein coupled receptor member B4 (323 aa).

At 1–34 (MSPTTQAWSINNTVVKENYYTEILSCITTFNTLN) the chain is on the extracellular side. A glycan (N-linked (GlcNAc...) asparagine) is linked at N11. A helical transmembrane segment spans residues 35 to 55 (FLIVIISVVGMAGNATVLWLL). Residues 56–63 (GFHMHRNA) lie on the Cytoplasmic side of the membrane. A helical transmembrane segment spans residues 64–84 (FSVYVLNLAGADFLYLCAQTV). Topologically, residues 85 to 98 (YSLECVLQFDNSYF) are extracellular. A helical transmembrane segment spans residues 99-119 (YFLLTILMFNYLAGFCMIAAI). The Cytoplasmic portion of the chain corresponds to 120–147 (STERCLSVTWPIWYHCQRPRHTSATVCA). The chain crosses the membrane as a helical span at residues 148–168 (LFWAFSLLLSLLLGQGCGFLF). At 169–180 (SKFDYSFCRYCN) the chain is on the extracellular side. The helical transmembrane segment at 181 to 201 (FIATAFLIVIFMVLFVSSLAL) threads the bilayer. Over 202-224 (LAKIICGSHRIPVTRFYVTIALT) the chain is Cytoplasmic. Residues 225-245 (VLVFIFFGLPIGICVFLLPWI) traverse the membrane as a helical segment. Topologically, residues 246–255 (HMMLSSFFYE) are extracellular. Residues 256–276 (MVTLLSCVNSCANPIIYFFVG) form a helical membrane-spanning segment. At 277–323 (SIRHHRLQRQTLKLLLQRAMQDTPEEEGGERGPSQKSEDLEVVRCSS) the chain is on the cytoplasmic side. Residues 298–323 (DTPEEEGGERGPSQKSEDLEVVRCSS) are disordered. Basic and acidic residues predominate over residues 312–323 (KSEDLEVVRCSS).

It belongs to the G-protein coupled receptor 1 family. Mas subfamily. Expressed strongly in newborn dorsal root ganglia, adult dorsal root ganglia and trigeminal ganlia.

Its subcellular location is the membrane. Its function is as follows. Orphan receptor. Probably involved in the function of nociceptive neurons. May regulate nociceptor function and/or development, including the sensation or modulation of pain. The sequence is that of Mas-related G-protein coupled receptor member B4 (Mrgprb4) from Rattus norvegicus (Rat).